Reading from the N-terminus, the 56-residue chain is Prokaryotic ubiquitin-like protein UBact (56 aa).

Residues 1–56 (MPERIVKPMPQDPVTKPGDEGPRTPNVPKPDTERLLERMRRVDPRQAQRYRQRSGE) are disordered. Residues 30-46 (PDTERLLERMRRVDPRQ) are compositionally biased toward basic and acidic residues. E56 is covalently cross-linked (Isoglutamyl lysine isopeptide (Glu-Lys) (interchain with K-? in acceptor proteins)).

It belongs to the ubiquitin-like protein UBact family.

May function as a protein modifier covalently attached to lysine residues of substrate proteins. This may serve to target the modified proteins for degradation by proteasomes. This chain is Prokaryotic ubiquitin-like protein UBact, found in Acetithermum autotrophicum.